The sequence spans 765 residues: Proton-coupled zinc antiporter SLC30A5 (765 aa).

Met1 bears the N-acetylmethionine mark. Over 1-32 (MEEKYGGDVLAGPGGGGGLGPVDVPSARLTKY) the chain is Cytoplasmic. A helical membrane pass occupies residues 33–53 (IVLLCFTKFLKAVGLFESYDL). The Lumenal portion of the chain corresponds to 54-56 (LKA). The helical transmembrane segment at 57-77 (VHIVQFIFILKLGTAFFMVLF) threads the bilayer. Over 78 to 98 (QKPFSSGKTITKHQWIKIFKH) the chain is Cytoplasmic. Residues 99 to 119 (AVAGCIISLLWFFGLTLCGPL) traverse the membrane as a helical segment. A topological domain (lumenal) is located at residue Arg120. Residues 121 to 141 (TLLLFEHSDIVVISLLSVLFT) form a helical membrane-spanning segment. Residues 142–152 (SSGGGPAKTRG) are Cytoplasmic-facing. The helical transmembrane segment at 153–173 (AAFFIIAVICLLLFDNDDLMA) threads the bilayer. Over 174-193 (KMAEHPEGHHDSALTHMLYT) the chain is Lumenal. The helical transmembrane segment at 194–214 (AIAFLGVADHKGGVLLLVLAL) threads the bilayer. Topologically, residues 215–238 (CCKVGFHTASRKLSVDVGGAKRLQ) are cytoplasmic. A helical transmembrane segment spans residues 239-259 (ALSHLVSVLLLCPWVIVLSVT). Residues 260–267 (TESKVESW) are Lumenal-facing. The helical transmembrane segment at 268 to 288 (FSLIMPFATVIFFVMILDFYV) threads the bilayer. The Cytoplasmic portion of the chain corresponds to 289–303 (DSICSVKMEVSKCAR). A helical transmembrane segment spans residues 304–324 (YGSFPIFISALLFGNFWTHPI). At 325–342 (TDQLRAMNKAAHQESTEH) the chain is on the lumenal side. A helical membrane pass occupies residues 343–363 (VLSGGVVVSAIFFILSANILS). At 364–418 (SPSKRGQKGTLIGYSPEGTPLYNFMGDAFQHSSQSIPRFIKESLKQILEESDSRQ) the chain is on the cytoplasmic side. Residues 419–439 (IFYFLCLNLLFTFVELFYGVL) traverse the membrane as a helical segment. Positions 420-640 (FYFLCLNLLF…ILIFLSVVPL (221 aa)) are mediates homodimerization with SLC30A6. The Lumenal segment spans residues 440 to 448 (TNSLGLISD). Residues 449 to 469 (GFHMLFDCSALVMGLFAALMS) form a helical membrane-spanning segment. Residues His451 and Asp455 each coordinate Zn(2+). Topologically, residues 470–483 (RWKATRIFSYGYGR) are cytoplasmic. The chain crosses the membrane as a helical span at residues 484-504 (IEILSGFINGLFLIVIAFFVF). The Lumenal portion of the chain corresponds to 505 to 520 (MESVARLIDPPELDTH). Residues 521–541 (MLTPVSVGGLIVNLIGICAFS) form a helical membrane-spanning segment. A his-rich loop; required for zinc transport region spans residues 542–578 (HAHSHAHGASQGSCHSSDHSHSHHMHGHSDHGHGHSH). Topologically, residues 542 to 592 (HAHSHAHGASQGSCHSSDHSHSHHMHGHSDHGHGHSHGSAGGGMNANMRGV) are cytoplasmic. The tract at residues 551–581 (SQGSCHSSDHSHSHHMHGHSDHGHGHSHGSA) is disordered. The helical transmembrane segment at 593 to 613 (FLHVLADTLGSIGVIVSTVLI) threads the bilayer. Zn(2+)-binding residues include His595 and Asp599. The Lumenal portion of the chain corresponds to 614-617 (EQFG). The chain crosses the membrane as a helical span at residues 618–638 (WFIADPLCSLFIAILIFLSVV). The Cytoplasmic portion of the chain corresponds to 639-765 (PLIKDACQVL…KYCKDGTYIM (127 aa)).

The protein belongs to the cation diffusion facilitator (CDF) transporter (TC 2.A.4) family. SLC30A subfamily. As to quaternary structure, heterodimer with SLC30A6/ZNT6; form a functional zinc ion transmembrane transporter. Post-translationally, could homodimerize through the formation of dityrosine bonds upon oxidative stress. In terms of tissue distribution, ubiquitously expressed. Highly expressed in pancreas, liver and kidney. Expressed abundantly in insulin-containing beta cells, undetectable in other endocrine cell types including glucagon-secreting alpha cells and most acinar cells (at protein level).

It is found in the golgi apparatus. It localises to the golgi stack membrane. The protein resides in the cytoplasmic vesicle. The protein localises to the COPII-coated vesicle membrane. Its subcellular location is the secretory vesicle membrane. It is found in the trans-Golgi network membrane. It localises to the endoplasmic reticulum membrane. The protein resides in the cell membrane. The protein localises to the apical cell membrane. The enzyme catalyses Zn(2+)(in) + 2 H(+)(out) = Zn(2+)(out) + 2 H(+)(in). Its function is as follows. Together with SLC30A6 forms a functional proton-coupled zinc ion antiporter mediating zinc entry into the lumen of organelles along the secretory pathway. By contributing to zinc ion homeostasis within the early secretory pathway, regulates the activation and folding of enzymes like alkaline phosphatases and enzymes involved in phosphatidylinositol glycan anchor biosynthesis. Through the transport of zinc into secretory granules of pancreatic beta-cells, plays an important role in the storage and secretion of insulin. Functionally, zinc ion:proton antiporter mediating influx and efflux of zinc at the plasma membrane. The chain is Proton-coupled zinc antiporter SLC30A5 from Homo sapiens (Human).